The primary structure comprises 518 residues: G-protein coupled receptor 161 (518 aa).

The Extracellular portion of the chain corresponds to Met1 to Ser26. Asn2 carries N-linked (GlcNAc...) asparagine glycosylation. The chain crosses the membrane as a helical span at residues Ile27–Leu47. Residues Tyr48–Lys59 lie on the Cytoplasmic side of the membrane. Residues Phe60–Val80 traverse the membrane as a helical segment. The Extracellular portion of the chain corresponds to Val81 to Phe97. Cys95 and Cys173 are oxidised to a cystine. Asn96 is a glycosylation site (N-linked (GlcNAc...) asparagine). The helical transmembrane segment at Ser98–Ile118 threads the bilayer. Residues Asp119–Arg138 are Cytoplasmic-facing. Residues Ala139–Phe159 traverse the membrane as a helical segment. Topologically, residues Gly160–Ala185 are extracellular. A helical membrane pass occupies residues Phe186–Ile206. Residues Phe207–Leu264 are Cytoplasmic-facing. A helical transmembrane segment spans residues Ile265–Ile285. The Extracellular segment spans residues Ser286 to Glu301. A helical transmembrane segment spans residues Thr302–Trp322. At Asn323–Val518 the chain is on the cytoplasmic side. Residues Glu429–Glu448 are disordered. Over residues Met439 to Glu448 the composition is skewed to polar residues.

Belongs to the G-protein coupled receptor 1 family.

It localises to the cell projection. It is found in the cilium membrane. The protein resides in the cell membrane. Key negative regulator of Shh signaling during neural tube development. Recruited to primary cilia and acts as a regulator of the PKA-dependent basal repression machinery in Shh signaling by increasing cAMP levels, leading to promote the PKA-dependent processing of gli3 into gli3r and repress the Shh signaling. In presence of shh, it is removed from primary cilia, preventing its activity and allowing activation of the Shh signaling. The polypeptide is G-protein coupled receptor 161 (gpr161) (Xenopus tropicalis (Western clawed frog)).